The following is a 550-amino-acid chain: Arginine--tRNA ligase (550 aa).

Residues 130–140 carry the 'HIGH' region motif; it reads ANPTGPIHLGG.

It belongs to the class-I aminoacyl-tRNA synthetase family. In terms of assembly, monomer.

The protein localises to the cytoplasm. The catalysed reaction is tRNA(Arg) + L-arginine + ATP = L-arginyl-tRNA(Arg) + AMP + diphosphate. The sequence is that of Arginine--tRNA ligase from Rhodococcus jostii (strain RHA1).